The chain runs to 523 residues: MSIDISTLFYELVAAISLYLATYSFIRFLFKPSHHHHLPPGPTGWPIIGALPLLGTMPHVSLADMAVKYGPIMYLKLGSKGTVVASNPKAARAFLKTHDANFSNRPIDGGPTYLAYNAQDMVFAEYGPKWKLLRKLCSLHMLGPKALEDWAHVKVSEVGHMLKEMYEQSSKSVPVPVVVPEMLTYAMANMIGRIILSRRPFVITSKLDSSASASASVSEFQYMVMELMRMAGLFNIGDFIPYIAWMDLQGIQRDMKVIQKKFDVLLNKMIKEHTESAHDRKDNPDFLDILMAATQENTEGIQLNLVNVKALLLDLFTAGTDTSSSVIEWALAEMLNHRQILNRAHEEMDQVIGRNRRLEQSDIPNLPYFQAICKETFRKHPSTPLNLPRISTEACEVDGFHIPKNTRLIVNIWAIGRDPKVWENPLDFTPERFLSEKHAKIDPRGNHFELIPFGAGRRICAGARMGAASVEYILGTLVHSFDWKLPDGVVEVNMEESFGIALQKKVPLSAIVTPRLPPSSYTV.

Cysteine 460 contacts heme.

It belongs to the cytochrome P450 family. Heme serves as cofactor.

It catalyses the reaction a 3',5'-unsubstituted flavanone + 2 reduced [NADPH--hemoprotein reductase] + 2 O2 = a 3',5'-dihydroxyflavanone + 2 oxidized [NADPH--hemoprotein reductase] + 2 H2O + 2 H(+). The protein operates within pigment biosynthesis; anthocyanin biosynthesis. Catalyzes the 3'5'-hydroxylation of naringenin and eriodictyol to form 5,7,3,'4',5'-pentahydroxyflavanone and 3',5'-hydroxylation of dihydrokaempferol and dihydroquercetin to form dihydromyricetin. The protein is Flavonoid 3',5'-hydroxylase (CYP75A6) of Campanula medium (Canterbury bells).